A 383-amino-acid polypeptide reads, in one-letter code: MKTGLTVLIAGGGIGGLTLGVALRRAGIAFKIFERAPALLRVGAGISMQSNAMLAFRTLGVDTAVAAAGQEIQGGAILNPRGEEISSMPVSKASAEVGAPMITIHRGRLQDVLHQIVGDDNLVLGAKVEGFRDGPDGLFVRLADGREFQGDLLVGADGLRSAVRAQLLKEPSPRYSGYTSWRGVCDVSEGVRRDYTSESWGPGMRFGVVPIGEGQTYWFATATAPEGGVDHPDARTELLQRFSGWHAPIPQLIENTPSSAIMRTDIHDRVPIRQWVQGRAVLLGDAAHPMTPNMGQGGCQAVEDAVVLARCLSLEAELPAALARYQAVRVERANDFVAGSYRIGQIGQWENAFACWVREKLMRMMSSDRVDARTRRNLQFTPL.

FAD contacts are provided by residues Gly-15, Ser-47, Val-128, Asp-285, and 295–299; that span reads GQGGC.

FAD is required as a cofactor.

The enzyme catalyses aurachin C + NADH + O2 + H(+) = 4-hydroxy-2-methyl-3-oxo-4-[(2E,6E)-farnesyl]-3,4-dihydroquinoline 1-oxide + NAD(+) + H2O. It carries out the reaction aurachin C + NADPH + O2 + H(+) = 4-hydroxy-2-methyl-3-oxo-4-[(2E,6E)-farnesyl]-3,4-dihydroquinoline 1-oxide + NADP(+) + H2O. The catalysed reaction is aurachin C + NADH + O2 + H(+) = aurachin C epoxide + NAD(+) + H2O. It catalyses the reaction aurachin C + NADPH + O2 + H(+) = aurachin C epoxide + NADP(+) + H2O. The enzyme catalyses aurachin C epoxide = 2-hydroxy-1a-methyl-7a-[(2E,6E)-farnesyl]-1a,2-dihydrooxireno[2,3-b]quinolin-7(7aH)-one. It carries out the reaction 2-hydroxy-1a-methyl-7a-[(2E,6E)-farnesyl]-1a,2-dihydrooxireno[2,3-b]quinolin-7(7aH)-one = 4-hydroxy-2-methyl-3-oxo-4-[(2E,6E)-farnesyl]-3,4-dihydroquinoline 1-oxide. Catalyzes the initial step in the conversion of aurachin C to aurachin B. Catalyzes the epoxidation of the C(2)-C(3) double bond of aurachin C, which is followed by a semipinacol rearrangement, causing migration of the farnesyl group from C(3) to C(4). Accepts both NADH and NADPH, but has a preference for NADH. This is Aurachin C monooxygenase/isomerase from Stigmatella aurantiaca.